The sequence spans 235 residues: 6-phosphogluconolactonase (235 aa).

The protein belongs to the glucosamine/galactosamine-6-phosphate isomerase family. 6-phosphogluconolactonase subfamily.

It catalyses the reaction 6-phospho-D-glucono-1,5-lactone + H2O = 6-phospho-D-gluconate + H(+). Its pathway is carbohydrate degradation; pentose phosphate pathway; D-ribulose 5-phosphate from D-glucose 6-phosphate (oxidative stage): step 2/3. Functionally, hydrolysis of 6-phosphogluconolactone to 6-phosphogluconate. The polypeptide is 6-phosphogluconolactonase (pgl) (Borreliella burgdorferi (strain ATCC 35210 / DSM 4680 / CIP 102532 / B31) (Borrelia burgdorferi)).